A 72-amino-acid chain; its full sequence is Translation initiation factor IF-1 (72 aa).

The S1-like domain occupies 1–72 (MSKEDVIEVE…SRGRIVYRFK (72 aa)).

Belongs to the IF-1 family. Component of the 30S ribosomal translation pre-initiation complex which assembles on the 30S ribosome in the order IF-2 and IF-3, IF-1 and N-formylmethionyl-tRNA(fMet); mRNA recruitment can occur at any time during PIC assembly.

The protein resides in the cytoplasm. One of the essential components for the initiation of protein synthesis. Stabilizes the binding of IF-2 and IF-3 on the 30S subunit to which N-formylmethionyl-tRNA(fMet) subsequently binds. Helps modulate mRNA selection, yielding the 30S pre-initiation complex (PIC). Upon addition of the 50S ribosomal subunit IF-1, IF-2 and IF-3 are released leaving the mature 70S translation initiation complex. This Desulfitobacterium hafniense (strain Y51) protein is Translation initiation factor IF-1.